The primary structure comprises 152 residues: Ribonuclease pancreatic beta-type (152 aa).

A signal peptide spans 1–25 (MGLXKSFALFSLLVLVLGWVQPSLS). The interval 25–53 (SGESRESSADKFKRQHMDPDSPSKSSPTY) is disordered. Residues 27–45 (ESRESSADKFKRQHMDPDS) are compositionally biased toward basic and acidic residues. 2 residues coordinate substrate: Lys-35 and Arg-38. The Proton acceptor role is filled by His-40. 4 cysteine pairs are disulfide-bonded: Cys-54–Cys-112, Cys-68–Cys-123, Cys-86–Cys-138, and Cys-93–Cys-100. Substrate-binding positions include 69 to 73 (KRVNT) and Lys-94. The active-site Proton donor is His-147.

This sequence belongs to the pancreatic ribonuclease family. In terms of assembly, monomer.

The protein localises to the secreted. The enzyme catalyses an [RNA] containing cytidine + H2O = an [RNA]-3'-cytidine-3'-phosphate + a 5'-hydroxy-ribonucleotide-3'-[RNA].. It carries out the reaction an [RNA] containing uridine + H2O = an [RNA]-3'-uridine-3'-phosphate + a 5'-hydroxy-ribonucleotide-3'-[RNA].. Functionally, endonuclease that catalyzes the cleavage of RNA on the 3' side of pyrimidine nucleotides. Acts on single-stranded and double-stranded RNA. In Rattus tiomanicus (Malayan field rat), this protein is Ribonuclease pancreatic beta-type.